Reading from the N-terminus, the 340-residue chain is 4-amino-5-hydroxymethyl-2-methylpyrimidine phosphate synthase THI5 (340 aa).

N6-(pyridoxal phosphate)lysine is present on lysine 62. The active site involves histidine 66. Residue 115 to 118 (GEFG) participates in pyridoxal 5'-phosphate binding. A CCCFC; essential for catalytic activity, may be the site of iron coordination motif is present at residues 195 to 199 (CCCFC).

Belongs to the NMT1/THI5 family. Homodimer. Fe cation serves as cofactor.

It catalyses the reaction N(6)-(pyridoxal phosphate)-L-lysyl-[4-amino-5-hydroxymethyl-2-methylpyrimidine phosphate synthase] + L-histidyl-[4-amino-5-hydroxymethyl-2-methylpyrimidine phosphate synthase] + 2 Fe(3+) + 4 H2O = L-lysyl-[4-amino-5-hydroxymethyl-2-methylpyrimidine phosphate synthase] + (2S)-2-amino-5-hydroxy-4-oxopentanoyl-[4-amino-5-hydroxymethyl-2-methylpyrimidine phosphate synthase] + 4-amino-2-methyl-5-(phosphooxymethyl)pyrimidine + 3-oxopropanoate + 2 Fe(2+) + 2 H(+). The protein operates within cofactor biosynthesis; thiamine diphosphate biosynthesis. Its function is as follows. Responsible for the formation of the pyrimidine heterocycle in the thiamine biosynthesis pathway. Catalyzes the formation of hydroxymethylpyrimidine phosphate (HMP-P) from histidine and pyridoxal phosphate (PLP). The protein uses PLP and the active site histidine to form HMP-P, generating an inactive enzyme. The enzyme can only undergo a single turnover, which suggests it is a suicide enzyme. The polypeptide is 4-amino-5-hydroxymethyl-2-methylpyrimidine phosphate synthase THI5 (Saccharomyces cerevisiae (strain ATCC 204508 / S288c) (Baker's yeast)).